The primary structure comprises 149 residues: Transcriptional repressor NrdR (149 aa).

The segment at 3–34 is a zinc-finger region; sequence CPFCSAVDTKVIDSRLVGEGSQVRRRRQCLVC. The ATP-cone domain occupies 49–139; sequence PRVIKSNEVR…VYRSFEDIRE (91 aa).

This sequence belongs to the NrdR family. It depends on Zn(2+) as a cofactor.

In terms of biological role, negatively regulates transcription of bacterial ribonucleotide reductase nrd genes and operons by binding to NrdR-boxes. This Pectobacterium atrosepticum (strain SCRI 1043 / ATCC BAA-672) (Erwinia carotovora subsp. atroseptica) protein is Transcriptional repressor NrdR.